The chain runs to 638 residues: 1-deoxy-D-xylulose-5-phosphate synthase (638 aa).

Thiamine diphosphate is bound by residues His79 and Gly120–Ser122. Asp151 contributes to the Mg(2+) binding site. Thiamine diphosphate-binding positions include Gly152 to Ala153, Asn182, Tyr291, and Glu373. Asn182 provides a ligand contact to Mg(2+).

This sequence belongs to the transketolase family. DXPS subfamily. As to quaternary structure, homodimer. The cofactor is Mg(2+). Thiamine diphosphate is required as a cofactor.

It catalyses the reaction D-glyceraldehyde 3-phosphate + pyruvate + H(+) = 1-deoxy-D-xylulose 5-phosphate + CO2. It participates in metabolic intermediate biosynthesis; 1-deoxy-D-xylulose 5-phosphate biosynthesis; 1-deoxy-D-xylulose 5-phosphate from D-glyceraldehyde 3-phosphate and pyruvate: step 1/1. Functionally, catalyzes the acyloin condensation reaction between C atoms 2 and 3 of pyruvate and glyceraldehyde 3-phosphate to yield 1-deoxy-D-xylulose-5-phosphate (DXP). In Xanthomonas oryzae pv. oryzae (strain MAFF 311018), this protein is 1-deoxy-D-xylulose-5-phosphate synthase.